The sequence spans 332 residues: MATPVPPPSPRHLRLLRLLLSGLILGAALNGATARRPDATTCPGSLDCALKRRAKCPPGAHACGPCLQSFQEDQRGFCVPRKHLSSGEGLPQPRLEEEIDSLAQELALKEKEAGHSRLTAQPLLEAAQKLLEPAATLGFSQWGQRLEPGLPSTHGTSSPIPHTSLSSRASSGPVQMSPLEPQGRHGNGLTLVLILAFCLASSAALAVAALCWCRLQREIRLTQKADYAATAKGPTSPSTPRISPGDQRLAHSAEMYHYQHQRQQMLCLERHKEPPKELESASSDEENEDGDFTVYECPGLAPTGEMEVRNPLFDHSTLSAPVPGPHSLPPLQ.

A signal peptide spans 1 to 34 (MATPVPPPSPRHLRLLRLLLSGLILGAALNGATA). Residues 145 to 182 (RLEPGLPSTHGTSSPIPHTSLSSRASSGPVQMSPLEPQ) form a disordered region. Over residues 153-174 (THGTSSPIPHTSLSSRASSGPV) the composition is skewed to polar residues. A helical transmembrane segment spans residues 191–211 (LVLILAFCLASSAALAVAALC). At serine 236 the chain carries Phosphoserine. Disordered regions lie at residues 272-300 (KEPP…CPGL) and 312-332 (LFDH…PPLQ). Acidic residues predominate over residues 282-291 (SSDEENEDGD). The span at 322–332 (VPGPHSLPPLQ) shows a compositional bias: pro residues.

It belongs to the NPDC1/cab-1 family. As to expression, expressed in the brain and nervous system. Not detected in liver, heart, skeletal muscle, spleen, pancreas, pituitary and adrenal glands. Expression increases when cultured neural cells are growth-arrested and begin to differentiate.

Its subcellular location is the membrane. Its function is as follows. Suppresses oncogenic transformation in neural and non-neural cells and down-regulates neural cell proliferation. Might be involved in transcriptional regulation. This chain is Neural proliferation differentiation and control protein 1 (Npdc1), found in Mus musculus (Mouse).